Consider the following 507-residue polypeptide: ATP synthase subunit alpha, chloroplastic (507 aa).

Residue 170–177 (GDRQTGKT) participates in ATP binding.

This sequence belongs to the ATPase alpha/beta chains family. As to quaternary structure, F-type ATPases have 2 components, CF(1) - the catalytic core - and CF(0) - the membrane proton channel. CF(1) has five subunits: alpha(3), beta(3), gamma(1), delta(1), epsilon(1). CF(0) has four main subunits: a, b, b' and c.

The protein resides in the plastid. It is found in the chloroplast thylakoid membrane. It carries out the reaction ATP + H2O + 4 H(+)(in) = ADP + phosphate + 5 H(+)(out). In terms of biological role, produces ATP from ADP in the presence of a proton gradient across the membrane. The alpha chain is a regulatory subunit. The polypeptide is ATP synthase subunit alpha, chloroplastic (Citrus sinensis (Sweet orange)).